A 201-amino-acid chain; its full sequence is Glycolipid transfer protein (201 aa).

Positions Ile28–Asp168 are glycolipid transfer protein homology domain.

In terms of biological role, cargo transport protein that plays a key role in transport and secretion of liamocins, glycolipids (also called heavy oils) composed of a single mannitol or arabitol headgroup linked to either three, four or even six 3,5-dihydroxydecanoic ester tail-groups. The sequence is that of Glycolipid transfer protein from Aureobasidium melanogenum (Aureobasidium pullulans var. melanogenum).